A 218-amino-acid polypeptide reads, in one-letter code: Mediator of RNA polymerase II transcription subunit 20 (218 aa).

This sequence belongs to the Mediator complex subunit 20 family. As to quaternary structure, component of the Mediator complex.

Its subcellular location is the nucleus. Its function is as follows. Component of the Mediator complex, a coactivator involved in the regulated transcription of nearly all RNA polymerase II-dependent genes. Mediator functions as a bridge to convey information from gene-specific regulatory proteins to the basal RNA polymerase II transcription machinery. Mediator is recruited to promoters by direct interactions with regulatory proteins and serves as a scaffold for the assembly of a functional preinitiation complex with RNA polymerase II and the general transcription factors. This Yarrowia lipolytica (strain CLIB 122 / E 150) (Yeast) protein is Mediator of RNA polymerase II transcription subunit 20 (SRB2).